Reading from the N-terminus, the 608-residue chain is RAS guanyl-releasing protein 2 (608 aa).

The 123-residue stretch at 4–126 folds into the N-terminal Ras-GEF domain; it reads TLDLDKGCTV…SLIDIESVPT (123 aa). S116, S117, and S147 each carry phosphoserine. Residues 154–387 enclose the Ras-GEF domain; that stretch reads EPMELAEHLT…YQLSLQREPR (234 aa). Residues 382–405 are disordered; sequence LQREPRSKSSPTSPTSCTPPPRPP. EF-hand domains lie at 426 to 461 and 463 to 490; these read HIEK…FPYL and AFGD…SSSV. Residues D439, D441, D443, H445, E450, D468, N470, D472, C474, and E479 each contribute to the Ca(2+) site. Residues 498–548 form a Phorbol-ester/DAG-type zinc finger; the sequence is VHNLQESNSLRPVACRHCKALILGIYKQGLKCRACGVNCHKQCKDRLSVEC. Phosphoserine occurs at positions 554 and 575. A disordered region spans residues 555–596; sequence VSLEGSAPSPSPTHTHHRAFSFSLPRPGRRSSRPPEIREEEV.

The protein belongs to the RASGRP family. As to quaternary structure, forms a signaling complex with RAP1 and BRAF. Interacts with F-actin. Interacts with RAP1. In terms of tissue distribution, expressed in striatal neurons (at protein level). Expressed in the hematopoietic system. Detected in olfactory structures and deep cortical layers of brain.

It localises to the cytoplasm. The protein resides in the cytosol. It is found in the cell membrane. Its subcellular location is the synapse. The protein localises to the synaptosome. It localises to the cell projection. The protein resides in the ruffle membrane. In terms of biological role, functions as a calcium- and DAG-regulated nucleotide exchange factor specifically activating Rap through the exchange of bound GDP for GTP. May also activate other GTPases such as RRAS, RRAS2, NRAS, KRAS but not HRAS. Functions in aggregation of platelets and adhesion of T-lymphocytes and neutrophils probably through inside-out integrin activation. May function in the muscarinic acetylcholine receptor M1/CHRM1 signaling pathway. The chain is RAS guanyl-releasing protein 2 (Rasgrp2) from Rattus norvegicus (Rat).